The sequence spans 430 residues: ATP-dependent RNA helicase RhlB (430 aa).

The Q motif motif lies at 9–37; it reads QKFSDFALHPQVIEALESKGFHYCTPIQA. A Helicase ATP-binding domain is found at 40 to 219; that stretch reads LPLTLSGRDV…FEQMNNAEYV (180 aa). 53–60 is an ATP binding site; that stretch reads AQTGTGKT. Positions 165–168 match the DEAD box motif; the sequence is DEAD. Positions 245–390 constitute a Helicase C-terminal domain; sequence RLLQTLLEEE…LSKYNSDALM (146 aa). A disordered region spans residues 392–430; the sequence is DLPAPKRLTRPPRSNNGPRRHNSAPRRSGAPRNNRKRAD.

The protein belongs to the DEAD box helicase family. RhlB subfamily. In terms of assembly, component of the RNA degradosome, which is a multiprotein complex involved in RNA processing and mRNA degradation.

The protein localises to the cytoplasm. It catalyses the reaction ATP + H2O = ADP + phosphate + H(+). Functionally, DEAD-box RNA helicase involved in RNA degradation. Has RNA-dependent ATPase activity and unwinds double-stranded RNA. The protein is ATP-dependent RNA helicase RhlB of Pectobacterium atrosepticum (strain SCRI 1043 / ATCC BAA-672) (Erwinia carotovora subsp. atroseptica).